The primary structure comprises 752 residues: Multifunctional tryptophan biosynthesis protein (752 aa).

In terms of domain architecture, Glutamine amidotransferase type-1 spans 23-223 (NVILIDNYDS…LELTAGTWDN (201 aa)). Residue 74-76 (GPG) coordinates L-glutamine. The Nucleophile; for GATase activity role is filled by Cys102. L-glutamine-binding positions include Gln106 and 152 to 153 (SL). Active-site for GATase activity residues include His197 and Glu199. Residues 239-503 (ILDKIYAHRK…DTSAFVAQLL (265 aa)) form an indole-3-glycerol phosphate synthase region. The interval 519–752 (LVKICGTRTE…FVKSAKSIRQ (234 aa)) is N-(5'-phosphoribosyl)anthranilate isomerase.

The catalysed reaction is N-(5-phospho-beta-D-ribosyl)anthranilate = 1-(2-carboxyphenylamino)-1-deoxy-D-ribulose 5-phosphate. It carries out the reaction 1-(2-carboxyphenylamino)-1-deoxy-D-ribulose 5-phosphate + H(+) = (1S,2R)-1-C-(indol-3-yl)glycerol 3-phosphate + CO2 + H2O. The enzyme catalyses chorismate + L-glutamine = anthranilate + pyruvate + L-glutamate + H(+). It functions in the pathway amino-acid biosynthesis; L-tryptophan biosynthesis; L-tryptophan from chorismate: step 1/5. The protein operates within amino-acid biosynthesis; L-tryptophan biosynthesis; L-tryptophan from chorismate: step 3/5. Its pathway is amino-acid biosynthesis; L-tryptophan biosynthesis; L-tryptophan from chorismate: step 4/5. Functionally, trifunctional enzyme bearing the Gln amidotransferase (GATase) domain of anthranilate synthase, indole-glycerolphosphate synthase, and phosphoribosylanthranilate isomerase activities. This is Multifunctional tryptophan biosynthesis protein (trpC) from Penicillium chrysogenum (Penicillium notatum).